A 163-amino-acid polypeptide reads, in one-letter code: Probable histone H2A.4 (163 aa).

Disordered regions lie at residues 1–30 (MEVG…VSRS) and 134–163 (SAAA…AAAA). The span at 12–21 (GAGGRRGGGG) shows a compositional bias: gly residues. A compositionally biased stretch (basic residues) spans 147 to 163 (KSPKKATTKSPKKAAAA). 2 short sequence motifs (SPKK motif) span residues 148–151 (SPKK) and 156–159 (SPKK).

It belongs to the histone H2A family. In terms of assembly, the nucleosome is a histone octamer containing two molecules each of H2A, H2B, H3 and H4 assembled in one H3-H4 heterotetramer and two H2A-H2B heterodimers. The octamer wraps approximately 147 bp of DNA.

It is found in the nucleus. It localises to the chromosome. Its function is as follows. Core component of nucleosome. Nucleosomes wrap and compact DNA into chromatin, limiting DNA accessibility to the cellular machineries which require DNA as a template. Histones thereby play a central role in transcription regulation, DNA repair, DNA replication and chromosomal stability. DNA accessibility is regulated via a complex set of post-translational modifications of histones, also called histone code, and nucleosome remodeling. This Oryza sativa subsp. indica (Rice) protein is Probable histone H2A.4.